Consider the following 543-residue polypeptide: NADH-ubiquinone oxidoreductase chain 4 (543 aa).

14 helical membrane-spanning segments follow: residues F5 to S25, V84 to F104, V129 to M149, S161 to D181, I182 to L202, F213 to M233, I254 to F274, P287 to F307, Y321 to L341, I350 to I370, I377 to V397, M416 to L436, L456 to F476, and F501 to I521.

It belongs to the complex I subunit 4 family.

It localises to the mitochondrion membrane. It carries out the reaction a ubiquinone + NADH + 5 H(+)(in) = a ubiquinol + NAD(+) + 4 H(+)(out). In terms of biological role, core subunit of the mitochondrial membrane respiratory chain NADH dehydrogenase (Complex I) that is believed to belong to the minimal assembly required for catalysis. Complex I functions in the transfer of electrons from NADH to the respiratory chain. The immediate electron acceptor for the enzyme is believed to be ubiquinone. In Neurospora crassa (strain ATCC 24698 / 74-OR23-1A / CBS 708.71 / DSM 1257 / FGSC 987), this protein is NADH-ubiquinone oxidoreductase chain 4 (ndh-4).